Here is a 267-residue protein sequence, read N- to C-terminus: Hydroxyethylthiazole kinase (267 aa).

Substrate is bound at residue Met-44. The ATP site is built by Arg-120 and Thr-165. Gly-192 lines the substrate pocket.

This sequence belongs to the Thz kinase family. It depends on Mg(2+) as a cofactor.

The catalysed reaction is 5-(2-hydroxyethyl)-4-methylthiazole + ATP = 4-methyl-5-(2-phosphooxyethyl)-thiazole + ADP + H(+). It functions in the pathway cofactor biosynthesis; thiamine diphosphate biosynthesis; 4-methyl-5-(2-phosphoethyl)-thiazole from 5-(2-hydroxyethyl)-4-methylthiazole: step 1/1. Functionally, catalyzes the phosphorylation of the hydroxyl group of 4-methyl-5-beta-hydroxyethylthiazole (THZ). This is Hydroxyethylthiazole kinase from Carboxydothermus hydrogenoformans (strain ATCC BAA-161 / DSM 6008 / Z-2901).